Consider the following 417-residue polypeptide: Histidine--tRNA ligase (417 aa).

The protein belongs to the class-II aminoacyl-tRNA synthetase family. As to quaternary structure, homodimer.

It localises to the cytoplasm. The catalysed reaction is tRNA(His) + L-histidine + ATP = L-histidyl-tRNA(His) + AMP + diphosphate + H(+). This Caldanaerobacter subterraneus subsp. tengcongensis (strain DSM 15242 / JCM 11007 / NBRC 100824 / MB4) (Thermoanaerobacter tengcongensis) protein is Histidine--tRNA ligase.